Here is a 211-residue protein sequence, read N- to C-terminus: WW domain-containing protein WWM1 (211 aa).

One can recognise a WW domain in the interval 9–43 (PQVPSGWKAVFDDEYQTWYYVDLSTNSSQWEPPRG). Residues 32-116 (STNSSQWEPP…QRYYPQQAPM (85 aa)) form a disordered region. Glycyl lysine isopeptide (Lys-Gly) (interchain with G-Cter in ubiquitin) cross-links involve residues lysine 50 and lysine 60. Residue serine 75 is modified to Phosphoserine. Threonine 78 is subject to Phosphothreonine. Residues 80–116 (QVQAGAQAQQPRYYQPQQPQYPQYPQQQRYYPQQAPM) are compositionally biased toward low complexity.

As to quaternary structure, interacts with metacaspase MCA1.

The protein resides in the cytoplasm. It localises to the nucleus. It is found in the mitochondrion. Functionally, involved in apoptosis. May play a role in nuclear function controlling cellular proliferation coupled to mitochondrial biogenesis. Causes impaired growth when overexpressed. This Saccharomyces cerevisiae (strain ATCC 204508 / S288c) (Baker's yeast) protein is WW domain-containing protein WWM1 (WWM1).